The chain runs to 356 residues: Phospho-N-acetylmuramoyl-pentapeptide-transferase (356 aa).

10 helical membrane passes run 27-47 (AAVATAMILGLWIGPRFILML), 73-93 (TMGGLMILISLMISALLWMDL), 97-117 (FVWACLFVTAGFAVVGFLDDY), 134-154 (LLVEFLIAGVAVLLIVSRTGT), 163-183 (GIVIPLGPFYYVFAMVLIVGF), 195-215 (GLATFPVIIASLTFLVIVYLS), 232-252 (AGELAVFAAAIIGACLAFLWF), 258-278 (AVFMGDTGSLALGGALATIAV), 285-305 (VLVLVGGLFVVEALSVIIQVF), and 333-353 (TVVIRFWIVSIVLALAGLATL).

It belongs to the glycosyltransferase 4 family. MraY subfamily. It depends on Mg(2+) as a cofactor.

It is found in the cell inner membrane. The enzyme catalyses UDP-N-acetyl-alpha-D-muramoyl-L-alanyl-gamma-D-glutamyl-meso-2,6-diaminopimeloyl-D-alanyl-D-alanine + di-trans,octa-cis-undecaprenyl phosphate = di-trans,octa-cis-undecaprenyl diphospho-N-acetyl-alpha-D-muramoyl-L-alanyl-D-glutamyl-meso-2,6-diaminopimeloyl-D-alanyl-D-alanine + UMP. Its pathway is cell wall biogenesis; peptidoglycan biosynthesis. In terms of biological role, catalyzes the initial step of the lipid cycle reactions in the biosynthesis of the cell wall peptidoglycan: transfers peptidoglycan precursor phospho-MurNAc-pentapeptide from UDP-MurNAc-pentapeptide onto the lipid carrier undecaprenyl phosphate, yielding undecaprenyl-pyrophosphoryl-MurNAc-pentapeptide, known as lipid I. The polypeptide is Phospho-N-acetylmuramoyl-pentapeptide-transferase (Sphingopyxis alaskensis (strain DSM 13593 / LMG 18877 / RB2256) (Sphingomonas alaskensis)).